A 509-amino-acid polypeptide reads, in one-letter code: Cysteine--tRNA ligase (509 aa).

Cysteine 19 contacts Zn(2+). Residues 21–31 carry the 'HIGH' region motif; sequence PTVYNDAHIGH. Positions 213, 238, and 242 each coordinate Zn(2+). A 'KMSKS' region motif is present at residues 284–288; that stretch reads KMSKS. Lysine 287 is an ATP binding site.

This sequence belongs to the class-I aminoacyl-tRNA synthetase family. It depends on Zn(2+) as a cofactor.

The enzyme catalyses tRNA(Cys) + L-cysteine + ATP = L-cysteinyl-tRNA(Cys) + AMP + diphosphate. In Acanthamoeba polyphaga (Amoeba), this protein is Cysteine--tRNA ligase (CARS).